The sequence spans 334 residues: GTPase Obg (334 aa).

The Obg domain maps to M1–L159. One can recognise an OBG-type G domain in the interval A160–Q331. Residues G166 to S173, F191 to Y195, D212 to G215, N282 to D285, and S312 to A314 contribute to the GTP site. Mg(2+)-binding residues include S173 and T193.

Belongs to the TRAFAC class OBG-HflX-like GTPase superfamily. OBG GTPase family. Monomer. The cofactor is Mg(2+).

The protein resides in the cytoplasm. In terms of biological role, an essential GTPase which binds GTP, GDP and possibly (p)ppGpp with moderate affinity, with high nucleotide exchange rates and a fairly low GTP hydrolysis rate. Plays a role in control of the cell cycle, stress response, ribosome biogenesis and in those bacteria that undergo differentiation, in morphogenesis control. This is GTPase Obg from Francisella tularensis subsp. tularensis (strain WY96-3418).